The chain runs to 260 residues: NH(3)-dependent NAD(+) synthetase (260 aa).

31–38 provides a ligand contact to ATP; that stretch reads GLSGGLDS. Mg(2+) is bound at residue Asp37. Deamido-NAD(+) is bound at residue Arg112. Thr132 is an ATP binding site. Glu137 serves as a coordination point for Mg(2+). ATP is bound by residues Lys161 and Ser183.

The protein belongs to the NAD synthetase family. Homodimer.

It carries out the reaction deamido-NAD(+) + NH4(+) + ATP = AMP + diphosphate + NAD(+) + H(+). Its pathway is cofactor biosynthesis; NAD(+) biosynthesis; NAD(+) from deamido-NAD(+) (ammonia route): step 1/1. Functionally, catalyzes the ATP-dependent amidation of deamido-NAD to form NAD. Uses ammonia as a nitrogen source. In Helicobacter pylori (strain P12), this protein is NH(3)-dependent NAD(+) synthetase.